We begin with the raw amino-acid sequence, 69 residues long: U2-agatoxin-Ao1o (69 aa).

Positions 1–20 (MKAIISLLLISAMVFSMFEA) are cleaved as a signal peptide. Residues 21–34 (VPVRRRFTAFEGER) constitute a propeptide that is removed on maturation. 3 disulfide bridges follow: C36-C52, C43-C57, and C51-C67. L68 is modified (leucine amide).

Belongs to the neurotoxin 01 (U2-agtx) family. Expressed by the venom gland.

It is found in the secreted. In terms of biological role, insect active toxin causing rapid but reversible paralysis in crickets. No activity shown in mammals. Does not show effect on mammalian voltage-gated calcium channels. The protein is U2-agatoxin-Ao1o of Agelena orientalis (Funnel-web spider).